Here is a 559-residue protein sequence, read N- to C-terminus: Putative protease Do-like 3, mitochondrial (559 aa).

Residues 1 to 48 (MSFLCVRTVSRFRSLSRALAPGFLLLHGNAVPKTAVFFRQQSSNTRLF) constitute a mitochondrion transit peptide. Residues 59–81 (ENNSKSALKNKLPPGKEVSSKDA) form a disordered region. The segment at 100–292 (VFTVSSKPRL…FLNAIEESGE (193 aa)) is serine protease. Residues His138, Asp169, and Ser247 each act as charge relay system in the active site. Residues 300–380 (NLTYQKMDND…HLVSMKKPCE (81 aa)) enclose the PDZ domain. Positions 538 to 559 (SEDLQPKQQNKRSKVPPKSKEH) are disordered. Residues 546-559 (QNKRSKVPPKSKEH) show a composition bias toward basic residues.

This sequence belongs to the peptidase S1C family.

Its subcellular location is the mitochondrion matrix. Its function is as follows. Putative serine protease. This chain is Putative protease Do-like 3, mitochondrial (DEGP3), found in Arabidopsis thaliana (Mouse-ear cress).